A 569-amino-acid polypeptide reads, in one-letter code: 2-succinyl-5-enolpyruvyl-6-hydroxy-3-cyclohexene-1-carboxylate synthase (569 aa).

Belongs to the TPP enzyme family. MenD subfamily. In terms of assembly, homodimer. The cofactor is Mg(2+). Mn(2+) serves as cofactor. Thiamine diphosphate is required as a cofactor.

It carries out the reaction isochorismate + 2-oxoglutarate + H(+) = 5-enolpyruvoyl-6-hydroxy-2-succinyl-cyclohex-3-ene-1-carboxylate + CO2. It functions in the pathway quinol/quinone metabolism; 1,4-dihydroxy-2-naphthoate biosynthesis; 1,4-dihydroxy-2-naphthoate from chorismate: step 2/7. It participates in cofactor biosynthesis; phylloquinone biosynthesis. Its function is as follows. Catalyzes the thiamine diphosphate-dependent decarboxylation of 2-oxoglutarate and the subsequent addition of the resulting succinic semialdehyde-thiamine pyrophosphate anion to isochorismate to yield 2-succinyl-5-enolpyruvyl-6-hydroxy-3-cyclohexene-1-carboxylate (SEPHCHC). The chain is 2-succinyl-5-enolpyruvyl-6-hydroxy-3-cyclohexene-1-carboxylate synthase from Microcystis aeruginosa (strain NIES-843 / IAM M-2473).